Consider the following 450-residue polypeptide: Phosphoglucosamine mutase (450 aa).

The Phosphoserine intermediate role is filled by Ser-102. Residues Ser-102, Asp-242, Asp-244, and Asp-246 each contribute to the Mg(2+) site. A Phosphoserine modification is found at Ser-102.

This sequence belongs to the phosphohexose mutase family. Mg(2+) is required as a cofactor. Activated by phosphorylation.

It catalyses the reaction alpha-D-glucosamine 1-phosphate = D-glucosamine 6-phosphate. Functionally, catalyzes the conversion of glucosamine-6-phosphate to glucosamine-1-phosphate. This is Phosphoglucosamine mutase from Staphylococcus haemolyticus (strain JCSC1435).